A 203-amino-acid polypeptide reads, in one-letter code: Superoxide dismutase [Mn] (203 aa).

Mn(2+)-binding residues include His-27, His-81, Asp-164, and His-168.

It belongs to the iron/manganese superoxide dismutase family. Homodimer. Requires Mn(2+) as cofactor.

It carries out the reaction 2 superoxide + 2 H(+) = H2O2 + O2. Destroys superoxide anion radicals which are normally produced within the cells and which are toxic to biological systems. The chain is Superoxide dismutase [Mn] (sodA) from Pseudomonas putida (Arthrobacter siderocapsulatus).